We begin with the raw amino-acid sequence, 205 residues long: Small ribosomal subunit protein uS4c (205 aa).

The tract at residues 22–42 (TSKISKKTNTPGEHGQPQNKL) is disordered. Polar residues predominate over residues 28–42 (KTNTPGEHGQPQNKL). The S4 RNA-binding domain occupies 94-157 (MRLDNIVYRL…ASRDLVKKFV (64 aa)).

Belongs to the universal ribosomal protein uS4 family. In terms of assembly, part of the 30S ribosomal subunit. Contacts protein S5. The interaction surface between S4 and S5 is involved in control of translational fidelity.

The protein localises to the plastid. Its subcellular location is the chloroplast. In terms of biological role, one of the primary rRNA binding proteins, it binds directly to 16S rRNA where it nucleates assembly of the body of the 30S subunit. With S5 and S12 plays an important role in translational accuracy. The sequence is that of Small ribosomal subunit protein uS4c (rps4) from Tupiella akineta (Green alga).